Consider the following 472-residue polypeptide: Probable glycine dehydrogenase (decarboxylating) subunit 2 (472 aa).

Residue K268 is modified to N6-(pyridoxal phosphate)lysine.

Belongs to the GcvP family. C-terminal subunit subfamily. As to quaternary structure, the glycine cleavage system is composed of four proteins: P, T, L and H. In this organism, the P 'protein' is a heterodimer of two subunits. Requires pyridoxal 5'-phosphate as cofactor.

It carries out the reaction N(6)-[(R)-lipoyl]-L-lysyl-[glycine-cleavage complex H protein] + glycine + H(+) = N(6)-[(R)-S(8)-aminomethyldihydrolipoyl]-L-lysyl-[glycine-cleavage complex H protein] + CO2. The glycine cleavage system catalyzes the degradation of glycine. The P protein binds the alpha-amino group of glycine through its pyridoxal phosphate cofactor; CO(2) is released and the remaining methylamine moiety is then transferred to the lipoamide cofactor of the H protein. The sequence is that of Probable glycine dehydrogenase (decarboxylating) subunit 2 from Thermoplasma acidophilum (strain ATCC 25905 / DSM 1728 / JCM 9062 / NBRC 15155 / AMRC-C165).